The primary structure comprises 405 residues: D-threonate kinase (405 aa).

Substrate-binding positions include Asp12, Arg59, and 88–91; that span reads KVDS. ATP contacts are provided by residues Ser243, 337–340, and Gly383; that span reads GGDG.

Belongs to the four-carbon acid sugar kinase family.

It catalyses the reaction D-threonate + ATP = 4-O-phospho-D-threonate + ADP + H(+). In terms of biological role, catalyzes the ATP-dependent phosphorylation of D-threonate to D-threonate 4-phosphate. Can also phosphorylate 4-hydroxy-L-threonine, with lower efficiency. The sequence is that of D-threonate kinase from Bordetella bronchiseptica (strain ATCC BAA-588 / NCTC 13252 / RB50) (Alcaligenes bronchisepticus).